Consider the following 238-residue polypeptide: Octanoyltransferase (238 aa).

One can recognise a BPL/LPL catalytic domain in the interval 44 to 224 (AGGPDSLLLL…AVLDALDGRI (181 aa)). Substrate-binding positions include 82–89 (RGGKITWH), 154–156 (AIG), and 167–169 (GFA). Cysteine 185 acts as the Acyl-thioester intermediate in catalysis.

Belongs to the LipB family.

It is found in the cytoplasm. It catalyses the reaction octanoyl-[ACP] + L-lysyl-[protein] = N(6)-octanoyl-L-lysyl-[protein] + holo-[ACP] + H(+). The protein operates within protein modification; protein lipoylation via endogenous pathway; protein N(6)-(lipoyl)lysine from octanoyl-[acyl-carrier-protein]: step 1/2. Catalyzes the transfer of endogenously produced octanoic acid from octanoyl-acyl-carrier-protein onto the lipoyl domains of lipoate-dependent enzymes. Lipoyl-ACP can also act as a substrate although octanoyl-ACP is likely to be the physiological substrate. This Mycolicibacterium gilvum (strain PYR-GCK) (Mycobacterium gilvum (strain PYR-GCK)) protein is Octanoyltransferase.